The sequence spans 227 residues: Cytidylate kinase (227 aa).

Residue 12 to 20 (GPSGAGKGT) coordinates ATP.

This sequence belongs to the cytidylate kinase family. Type 1 subfamily.

The protein localises to the cytoplasm. The enzyme catalyses CMP + ATP = CDP + ADP. It catalyses the reaction dCMP + ATP = dCDP + ADP. The polypeptide is Cytidylate kinase (Xanthomonas oryzae pv. oryzae (strain PXO99A)).